A 415-amino-acid chain; its full sequence is Lipoyl synthase, mitochondrial (415 aa).

The N-terminal 33 residues, 1–33, are a transit peptide targeting the mitochondrion; that stretch reads MAASTSHLRSLCSSTRSLSRSGVIVTPIACRGY. Residues Cys132, Cys137, Cys143, Cys163, Cys167, Cys170, and Ser378 each coordinate [4Fe-4S] cluster. In terms of domain architecture, Radical SAM core spans 148 to 367; it reads DKSSATATIM…RQRALEMGFL (220 aa).

This sequence belongs to the radical SAM superfamily. Lipoyl synthase family. [4Fe-4S] cluster serves as cofactor.

Its subcellular location is the mitochondrion. The enzyme catalyses [[Fe-S] cluster scaffold protein carrying a second [4Fe-4S](2+) cluster] + N(6)-octanoyl-L-lysyl-[protein] + 2 oxidized [2Fe-2S]-[ferredoxin] + 2 S-adenosyl-L-methionine + 4 H(+) = [[Fe-S] cluster scaffold protein] + N(6)-[(R)-dihydrolipoyl]-L-lysyl-[protein] + 4 Fe(3+) + 2 hydrogen sulfide + 2 5'-deoxyadenosine + 2 L-methionine + 2 reduced [2Fe-2S]-[ferredoxin]. The protein operates within protein modification; protein lipoylation via endogenous pathway; protein N(6)-(lipoyl)lysine from octanoyl-[acyl-carrier-protein]: step 2/2. Functionally, catalyzes the radical-mediated insertion of two sulfur atoms into the C-6 and C-8 positions of the octanoyl moiety bound to the lipoyl domains of lipoate-dependent enzymes, thereby converting the octanoylated domains into lipoylated derivatives. This is Lipoyl synthase, mitochondrial from Aspergillus clavatus (strain ATCC 1007 / CBS 513.65 / DSM 816 / NCTC 3887 / NRRL 1 / QM 1276 / 107).